Consider the following 376-residue polypeptide: Rhodopsin (376 aa).

Residues 1-52 (MSSWSNQPAMDDYGLPSSNPYGNFTVVDMAPKDILHMIHPHWYQYPPMNPMM) lie on the Extracellular side of the membrane. A glycan (N-linked (GlcNAc...) asparagine) is linked at N23. Residues 53-77 (YPLLLIFMLFTGILCLAGNFVTIWV) form a helical membrane-spanning segment. The Cytoplasmic segment spans residues 78–89 (FMNTKSLRTPAN). A helical membrane pass occupies residues 90–112 (LLVVNLAMSDFLMMFTMFPPMMV). The Extracellular portion of the chain corresponds to 113-126 (TCYYHTWTLGPTFC). C126 and C203 are joined by a disulfide. A helical membrane pass occupies residues 127–149 (QVYAFLGNLCGCASIWTMVFITF). The 'Ionic lock' involved in activated form stabilization motif lies at 150 to 152 (DRY). Topologically, residues 150–168 (DRYNVIVKGVAGEPLSTKK) are cytoplasmic. A helical membrane pass occupies residues 169-189 (ASLWILTIWVLSITWCIAPFF). Over 190 to 216 (GWNRYVPEGNLTGCGTDYLSEDILSRS) the chain is Extracellular. N-linked (GlcNAc...) asparagine glycosylation occurs at N199. The helical transmembrane segment at 217 to 237 (YLYDYSTWVYYLPLLPIYCYV) threads the bilayer. Residues 238–278 (SIIKAVAAHEKGMRDQAKKMGIKSLRNEEAQKTSAECRLAK) lie on the Cytoplasmic side of the membrane. A helical membrane pass occupies residues 279–300 (IAMTTVALWFIAWTPYLLINWV). The Extracellular segment spans residues 301-311 (GMFARSYLSPV). Residues 312 to 333 (YTIWGYVFAKANAVYNPIVYAI) traverse the membrane as a helical segment. Position 321 is an N6-(retinylidene)lysine (K321). The Cytoplasmic portion of the chain corresponds to 334-376 (SHPKYRAAMEKKLPCLSCKTESDDVSESASTTTSSAEEKAESA). A disordered region spans residues 353–376 (TESDDVSESASTTTSSAEEKAESA).

This sequence belongs to the G-protein coupled receptor 1 family. Opsin subfamily. Homodimer. Interacts with GNAQ. Post-translationally, contains one covalently linked retinal chromophore. In terms of tissue distribution, detected on rhabdomere membranes on photoreceptor cells in the retina (at protein level).

Its subcellular location is the cell projection. It localises to the rhabdomere membrane. Its function is as follows. Photoreceptor required for image-forming vision at low light intensity. Can use both retinal and 3-dehydroretinal as visual pigment. Light-induced isomerization of 11-cis to all-trans retinal triggers a conformational change that activates signaling via G-proteins. Signaling via GNAQ probably mediates the activation of phospholipase C. This chain is Rhodopsin (RHO), found in Procambarus clarkii (Red swamp crayfish).